A 128-amino-acid chain; its full sequence is MKLHLLKSKIHNAIVTSGDLEYEGSITIDSELLEMAQMIPNEKVLVVNNNNGERFETYIIKGDYGSRVIQLNGAAARCALPGDEIIIMTFAVMDEKEAGSHKPMVLIVDRNNNPKRRHRVGEEDELLS.

Catalysis depends on Ser-25, which acts as the Schiff-base intermediate with substrate; via pyruvic acid. The residue at position 25 (Ser-25) is a Pyruvic acid (Ser). Residue Thr-57 participates in substrate binding. Tyr-58 (proton donor) is an active-site residue. 73–75 is a substrate binding site; that stretch reads GAA.

This sequence belongs to the PanD family. As to quaternary structure, heterooctamer of four alpha and four beta subunits. Pyruvate serves as cofactor. Is synthesized initially as an inactive proenzyme, which is activated by self-cleavage at a specific serine bond to produce a beta-subunit with a hydroxyl group at its C-terminus and an alpha-subunit with a pyruvoyl group at its N-terminus.

Its subcellular location is the cytoplasm. The catalysed reaction is L-aspartate + H(+) = beta-alanine + CO2. It functions in the pathway cofactor biosynthesis; (R)-pantothenate biosynthesis; beta-alanine from L-aspartate: step 1/1. Functionally, catalyzes the pyruvoyl-dependent decarboxylation of aspartate to produce beta-alanine. The chain is Aspartate 1-decarboxylase from Chlorobium limicola (strain DSM 245 / NBRC 103803 / 6330).